A 1049-amino-acid chain; its full sequence is Cellulose synthase A catalytic subunit 4 [UDP-forming] (1049 aa).

Residues Met-1 to Arg-215 are Cytoplasmic-facing. 8 residues coordinate Zn(2+): Cys-23, Cys-26, Cys-42, Cys-45, Cys-50, Cys-53, Cys-65, and Cys-68. The segment at Cys-23–Asn-69 adopts an RING-type; degenerate zinc-finger fold. Residues Lys-76–Asn-98 form a disordered region. A compositionally biased stretch (acidic residues) spans Asp-84–Glu-96. Ser-135 carries the post-translational modification Phosphoserine. Residues Ile-216–Pro-236 form a helical membrane-spanning segment. Over Ala-237 to Asp-239 the chain is Extracellular. A helical transmembrane segment spans residues Ala-240–Leu-260. Topologically, residues Asp-261 to Ser-831 are cytoplasmic. UDP-alpha-D-glucose contacts are provided by Ser-299, Lys-305, Glu-306, and Asp-335. The active site involves Asp-335. The stretch at Val-389 to Lys-416 forms a coiled coil. Lys-476 provides a ligand contact to UDP-alpha-D-glucose. Positions 477 and 501 each coordinate Mn(2+). Asp-748 is a catalytic residue. A helical membrane pass occupies residues Ile-832–Ile-852. Residues Pro-853–Asn-857 are Extracellular-facing. Residues Phe-858–Leu-878 traverse the membrane as a helical segment. Residues Arg-879 to Trp-895 lie on the Cytoplasmic side of the membrane. The helical transmembrane segment at Val-896–Phe-916 threads the bilayer. Over Gly-917 to Thr-945 the chain is Extracellular. A glycan (N-linked (GlcNAc...) asparagine) is linked at Asn-921. Residues Thr-946–Val-966 form a helical membrane-spanning segment. Residues Ser-967–Trp-977 are Cytoplasmic-facing. Residues Gly-978–Leu-998 form a helical membrane-spanning segment. At Lys-999 to Arg-1007 the chain is on the extracellular side. The chain crosses the membrane as a helical span at residues Thr-1008–Val-1028. Topologically, residues Arg-1029 to Cys-1049 are cytoplasmic.

It belongs to the glycosyltransferase 2 family. Plant cellulose synthase subfamily. In terms of assembly, interacts with CESA7 and CESA8. Assembly with CESA7 and CESA8 is required for functional complex and localization in secondary cell wall deposition sites. Interacts with STL1 and STL2, but not with GOT1. Zn(2+) serves as cofactor. The cofactor is Mn(2+). S-acylated. Confined to secondary cell wall developing tissues such as xylems and interfascicular regions. Expressed in roots, hypocotyls, leaves, inflorescences and flowers.

It is found in the cell membrane. It carries out the reaction [(1-&gt;4)-beta-D-glucosyl](n) + UDP-alpha-D-glucose = [(1-&gt;4)-beta-D-glucosyl](n+1) + UDP + H(+). It functions in the pathway glycan metabolism; plant cellulose biosynthesis. Functionally, catalytic subunit of cellulose synthase terminal complexes ('rosettes'), required for beta-1,4-glucan microfibril crystallization, a major mechanism of the cell wall formation. Involved in the secondary cell wall formation. Required for the xylem cell wall thickening. This Arabidopsis thaliana (Mouse-ear cress) protein is Cellulose synthase A catalytic subunit 4 [UDP-forming].